The chain runs to 520 residues: GMP synthase [glutamine-hydrolyzing] (520 aa).

The Glutamine amidotransferase type-1 domain occupies 12–205 (KIIVLDYGSQ…AISICGARGD (194 aa)). Cys89 acts as the Nucleophile in catalysis. Catalysis depends on residues His179 and Glu181. Positions 206–395 (WSMDNFIDME…LGMPDEVVWR (190 aa)) constitute a GMPS ATP-PPase domain. An ATP-binding site is contributed by 233–239 (SGGVDSS).

In terms of assembly, homodimer.

It carries out the reaction XMP + L-glutamine + ATP + H2O = GMP + L-glutamate + AMP + diphosphate + 2 H(+). The protein operates within purine metabolism; GMP biosynthesis; GMP from XMP (L-Gln route): step 1/1. Its function is as follows. Catalyzes the synthesis of GMP from XMP. In Streptococcus equi subsp. zooepidemicus (strain H70), this protein is GMP synthase [glutamine-hydrolyzing].